Here is a 293-residue protein sequence, read N- to C-terminus: uncharacterized protein (293 aa).

The HTH lysR-type domain occupies 1–58 (MQLQELHMLVVLAEELNMRKAAERLFVSQPALSQRLQTIEKAWGTKIFLRSQKGLTVT). Residues 18–37 (MRKAAERLFVSQPALSQRLQ) constitute a DNA-binding region (H-T-H motif).

This sequence belongs to the LysR transcriptional regulatory family.

This is an uncharacterized protein from Bacillus subtilis (strain 168).